The chain runs to 280 residues: Phosphatidylserine decarboxylase proenzyme (280 aa).

Catalysis depends on charge relay system; for autoendoproteolytic cleavage activity residues D88, H145, and S248. The active-site Schiff-base intermediate with substrate; via pyruvic acid; for decarboxylase activity is S248. S248 bears the Pyruvic acid (Ser); by autocatalysis mark.

Belongs to the phosphatidylserine decarboxylase family. PSD-B subfamily. Prokaryotic type I sub-subfamily. Heterodimer of a large membrane-associated beta subunit and a small pyruvoyl-containing alpha subunit. The cofactor is pyruvate. Is synthesized initially as an inactive proenzyme. Formation of the active enzyme involves a self-maturation process in which the active site pyruvoyl group is generated from an internal serine residue via an autocatalytic post-translational modification. Two non-identical subunits are generated from the proenzyme in this reaction, and the pyruvate is formed at the N-terminus of the alpha chain, which is derived from the carboxyl end of the proenzyme. The autoendoproteolytic cleavage occurs by a canonical serine protease mechanism, in which the side chain hydroxyl group of the serine supplies its oxygen atom to form the C-terminus of the beta chain, while the remainder of the serine residue undergoes an oxidative deamination to produce ammonia and the pyruvoyl prosthetic group on the alpha chain. During this reaction, the Ser that is part of the protease active site of the proenzyme becomes the pyruvoyl prosthetic group, which constitutes an essential element of the active site of the mature decarboxylase.

It localises to the cell membrane. It catalyses the reaction a 1,2-diacyl-sn-glycero-3-phospho-L-serine + H(+) = a 1,2-diacyl-sn-glycero-3-phosphoethanolamine + CO2. It participates in phospholipid metabolism; phosphatidylethanolamine biosynthesis; phosphatidylethanolamine from CDP-diacylglycerol: step 2/2. Functionally, catalyzes the formation of phosphatidylethanolamine (PtdEtn) from phosphatidylserine (PtdSer). This chain is Phosphatidylserine decarboxylase proenzyme, found in Methylobacillus flagellatus (strain ATCC 51484 / DSM 6875 / VKM B-1610 / KT).